Here is a 1473-residue protein sequence, read N- to C-terminus: MYSSSNSFMGGANSARPGQPPFMQQPSYGQQTTQQQQQHQTGLAPQPNGYGSQLSGFGGSHLQPQPTGFSPGQLQSQMTGFPQLQQQPGFQTSAQPPQLTGYSIQSQAPQLQVPSSTGLPVRLAPQTSSEIADSFRGSAGAAPPPPPKTAGSKIPNIRLSFITAQDQAKFEQLFKSAVGDSQTMSGEKAKDLLLRSRLPGSDLSKIWVLSDTTKSGQLFFPEFALAMYLCNIRITGRGLPDALPEKIKNEVSSMVDIISFQVPDTQPEMAFPTNAPKFDAPLLENKSAPPAPQQPQPQQPTHSQLLTQLTAQPTGFHTQPTGIQSTQASFPGQSSSLVPQATAFPGQSQQQFLQTQPTGLMSNPQPTGYSGLRPPVPPMPTSLGPNLSPAQTGGVSGLVAQPTGVPGQWGFVNAPSSGLPNIEALKQQLMPQPGREGGFSAAGLSGNAHIPWAITKEEKKIYDDLFRAWDGFHKGFIGGDTAIEIMGQSGLDQKDLERIWTLADPHNRGRLNMDEFAVAMHLIYRKLNGYPVPNRLPPELVPPSTRNLNDSIGTIKSMLSQDAESRKASGAFLQPQKTGVSYLKDHSFRGGSGVSPGFGRKDATLFKNNDEAASGYRSSARRRVGNNGRTPSPATSQTSEEELSVGQLRKKIRETQIMLDAVDFQDENRAEEEDALDRRDRREVESLLDRIRRVQDDIDTHPDAAFRNLDNGAERRSLRRQLQSYEDQVPQVASDVRRVEREIAEAKLELFRLKDAKAHPNSASNIVGTGPGGAVTEADRIKARARARMQARAAELAGRPTPSSQEDDGAAARRVEAESAKVKADREKNDAMTRDVEDSVKDFARSLEDTLKDASENSTREHERRRWEDALGVEDVIRDFIYDLKRNSRTAYVRKEEASRSMHEEHERSRYDEAPATRPSPPPSTGSTGSLPGSTHEDRVAAARERAQKRIAERMAAAGLKPHNNTAETLLQRQEREKKEREDRLKQAEEEDTRREQERQRRLAEEQGGSMAQPAKPASKKPPPAPPSRRGRTDSAGQAEAKRAAEESAIVEQAAREQTIREEEEAQQERKRLEDDARKREEEFQREKEAQEARLRALQEQVQQGKIKKQEAKRRKEEADRLAKEQEAKLTVQRAELEMAKERERQLQLELEALDEESSSDEEGPENITPQHSTPGQSQILPEVDIAAPVAPSALVPPVPGPEPDRPTSATSSPTSDRTGLAHLPLETESKNPYFKKISLPAESQVATPQPISKAPVTSPKADVQSTNPFHRLAQQQENAKPAFTAAGPIERVSRARPEVDDDWSAAGSDFDSSDDDERPGGGSAKQLASILFGTMAPPRPLSAMDDKSPSKPSTPAPDTPVAASTAPEADGTLSIPSASIPPPPPPVVAQVPSIALSSGPPDAPPPPPPPPVPHMAPSAPPPGIPPPPAPPAAPAGAPNRSALLASIQAGKGLRKVQTNDRSLSSVAGRVLD.

Disordered stretches follow at residues 1 to 121 and 134 to 153; these read MYSS…GLPV and SFRGSAGAAPPPPPKTAGSK. Low complexity predominate over residues 24–47; that stretch reads QQPSYGQQTTQQQQQHQTGLAPQP. Polar residues predominate over residues 62–78; it reads LQPQPTGFSPGQLQSQM. Residues 79–92 are compositionally biased toward low complexity; that stretch reads TGFPQLQQQPGFQT. Positions 93-118 are enriched in polar residues; the sequence is SAQPPQLTGYSIQSQAPQLQVPSSTG. The EH 1 domain occupies 166–254; that stretch reads DQAKFEQLFK…EKIKNEVSSM (89 aa). The 36-residue stretch at 198–233 folds into the EF-hand 1 domain; sequence LPGSDLSKIWVLSDTTKSGQLFFPEFALAMYLCNIR. The tract at residues 266–366 is disordered; sequence QPEMAFPTNA…PTGLMSNPQP (101 aa). The segment covering 289-298 has biased composition (pro residues); it reads PPAPQQPQPQ. Residues 301 to 339 are compositionally biased toward polar residues; that stretch reads THSQLLTQLTAQPTGFHTQPTGIQSTQASFPGQSSSLVP. Residues 344–360 are compositionally biased toward low complexity; that stretch reads FPGQSQQQFLQTQPTGL. The EH 2 domain maps to 458-547; it reads EKKIYDDLFR…PELVPPSTRN (90 aa). One can recognise an EF-hand 2 domain in the interval 491–526; that stretch reads LDQKDLERIWTLADPHNRGRLNMDEFAVAMHLIYRK. The interval 609-645 is disordered; it reads NDEAASGYRSSARRRVGNNGRTPSPATSQTSEEELSV. Positions 627 to 638 are enriched in polar residues; the sequence is NGRTPSPATSQT. The stretch at 678-759 forms a coiled coil; the sequence is RRDRREVESL…LFRLKDAKAH (82 aa). Disordered stretches follow at residues 793–837, 891–1265, and 1277–1473; these read AAEL…RDVE, AYVR…ADVQ, and QENA…RVLD. Composition is skewed to basic and acidic residues over residues 810–837 and 893–915; these read AAARRVEAESAKVKADREKNDAMTRDVE and VRKEEASRSMHEEHERSRYDEAP. Residues 925–934 are compositionally biased toward low complexity; sequence TGSTGSLPGS. Composition is skewed to basic and acidic residues over residues 935-953, 973-1005, 1054-1097, 1108-1128, and 1135-1147; these read THEDRVAAARERAQKRIAE, RQEREKKEREDRLKQAEEEDTRREQERQRRLAE, AARE…RLRA, KKQEAKRRKEEADRLAKEQEA, and AELEMAKERERQL. Positions 963 to 1163 form a coiled coil; sequence HNNTAETLLQ…LDEESSSDEE (201 aa). Residues 1152–1165 show a composition bias toward acidic residues; that stretch reads EALDEESSSDEEGP. Composition is skewed to polar residues over residues 1168–1180 and 1208–1218; these read ITPQHSTPGQSQI and TSATSSPTSDR. Residues 1402-1434 show a composition bias toward pro residues; that stretch reads PDAPPPPPPPPVPHMAPSAPPPGIPPPPAPPAA. In terms of domain architecture, WH2 spans 1440-1457; that stretch reads NRSALLASIQAGKGLRKV.

This sequence belongs to the PAN1 family. Component of the PAN1 actin cytoskeleton-regulatory complex.

It localises to the cell membrane. The protein localises to the endosome membrane. Its subcellular location is the cytoplasm. It is found in the cytoskeleton. The protein resides in the actin patch. Functionally, component of the PAN1 actin cytoskeleton-regulatory complex required for the internalization of endosomes during actin-coupled endocytosis. The complex links the site of endocytosis to the cell membrane-associated actin cytoskeleton. Mediates uptake of external molecules and vacuolar degradation of plasma membrane proteins. Plays a role in the proper organization of the cell membrane-associated actin cytoskeleton and promotes its destabilization. This Aspergillus oryzae (strain ATCC 42149 / RIB 40) (Yellow koji mold) protein is Actin cytoskeleton-regulatory complex protein pan1 (pan1).